A 715-amino-acid polypeptide reads, in one-letter code: ATP-dependent DNA helicase Hel308 (715 aa).

Positions 1–29 match the Q motif motif; sequence MKVEELRIDERIKEVLKKRGISELYPPQA. Residues Gln28 and 46 to 53 contribute to the ATP site; that span reads IPTASGKT. The Helicase ATP-binding domain maps to 33–197; the sequence is TSGILKGENA…WLNAKLIKSD (165 aa). The short motif at 145 to 148 is the DEAH box element; sequence DEIH. Residues 229 to 422 form the Helicase C-terminal domain; the sequence is LVYDAIKRSK…ILRGQILALI (194 aa).

It belongs to the helicase family. Hel308 subfamily. Monomer.

It carries out the reaction Couples ATP hydrolysis with the unwinding of duplex DNA by translocating in the 3'-5' direction.. It catalyses the reaction ATP + H2O = ADP + phosphate + H(+). Functionally, DNA-dependent ATPase and 3'-5' DNA helicase that may be involved in repair of stalled replication forks. This chain is ATP-dependent DNA helicase Hel308, found in Pyrococcus horikoshii (strain ATCC 700860 / DSM 12428 / JCM 9974 / NBRC 100139 / OT-3).